A 112-amino-acid chain; its full sequence is MTKRVLFELFVEEKNVGKAINIMTLAGITGFFLHKYRGLSPDKFKNLSKEELEDIEKVYEIIRDESDKAVVIGTVVKEEKAKKIEELLKEKMNNERWTVMKIPILKVKVHRV.

The protein to M.jannaschii MJ1244 and M.thermoautotrophicum MTH1110.

This is an uncharacterized protein from Methanocaldococcus jannaschii (strain ATCC 43067 / DSM 2661 / JAL-1 / JCM 10045 / NBRC 100440) (Methanococcus jannaschii).